Here is a 771-residue protein sequence, read N- to C-terminus: Ribonucleoside-diphosphate reductase large subunit (771 aa).

Residues 1–92 (MFVIKRNGYK…VSNLHKETKK (92 aa)) form the ATP-cone domain. Residues 5 to 6 (KR), 11 to 17 (ENVMFDK), threonine 53, aspartate 57, and lysine 88 each bind ATP. Positions 202 and 217 each coordinate GDP. Residues 226 to 228 (DSI), lysine 243, and arginine 256 each bind dTTP. Asparagine 427 contacts GDP. Asparagine 427 acts as the Proton acceptor in catalysis. The Cysteine radical intermediate role is filled by cysteine 429. Residues glutamate 431 and 603–606 (TAST) contribute to the GDP site. Residue glutamate 431 is the Proton acceptor of the active site.

Belongs to the ribonucleoside diphosphate reductase large chain family. Interacts with RNR2/OPG047 subunit. Mg(2+) is required as a cofactor.

The enzyme catalyses a 2'-deoxyribonucleoside 5'-diphosphate + [thioredoxin]-disulfide + H2O = a ribonucleoside 5'-diphosphate + [thioredoxin]-dithiol. Its function is as follows. Ribonucleoside-diphosphate reductase holoenzyme provides the precursors necessary for viral DNA synthesis. Allows virus growth in non-dividing cells. Catalyzes the biosynthesis of deoxyribonucleotides from the corresponding ribonucleotides. This Homo sapiens (Human) protein is Ribonucleoside-diphosphate reductase large subunit (OPG080).